The chain runs to 648 residues: Biosynthetic arginine decarboxylase (648 aa).

The residue at position 109 (Lys-109) is an N6-(pyridoxal phosphate)lysine. A substrate-binding site is contributed by 291 to 301 (IDVGGGLGIDF).

The protein belongs to the Orn/Lys/Arg decarboxylase class-II family. SpeA subfamily. Mg(2+) is required as a cofactor. It depends on pyridoxal 5'-phosphate as a cofactor.

It carries out the reaction L-arginine + H(+) = agmatine + CO2. The protein operates within amine and polyamine biosynthesis; agmatine biosynthesis; agmatine from L-arginine: step 1/1. Its function is as follows. Catalyzes the biosynthesis of agmatine from arginine. This Prochlorococcus marinus (strain MIT 9215) protein is Biosynthetic arginine decarboxylase.